The chain runs to 197 residues: RNA chaperone ProQ (197 aa).

The interval 115-138 is disordered; that stretch reads RAAAKKAQQKKHPRKPANKNLKKE. The segment covering 117 to 131 has biased composition (basic residues); that stretch reads AAKKAQQKKHPRKPA.

Belongs to the ProQ family.

The protein resides in the cytoplasm. Its function is as follows. RNA chaperone with significant RNA binding, RNA strand exchange and RNA duplexing activities. This is RNA chaperone ProQ from Haemophilus influenzae (strain ATCC 51907 / DSM 11121 / KW20 / Rd).